A 299-amino-acid polypeptide reads, in one-letter code: Putative beta-glucosidase 2 (299 aa).

Residues 1–16 (MLHCITTIFLSISRMT) form the signal peptide. 49 to 50 (NE) contacts a beta-D-glucoside. The active-site Proton donor is Glu-50. Cys-69 and Cys-72 are oxidised to a cystine. Asn-71 and Asn-76 each carry an N-linked (GlcNAc...) asparagine glycan. Tyr-189 is a binding site for a beta-D-glucoside. The N-linked (GlcNAc...) asparagine glycan is linked to Asn-222. Glu-255 contacts a beta-D-glucoside. Catalysis depends on Glu-255, which acts as the Nucleophile. An N-linked (GlcNAc...) asparagine glycan is attached at Asn-290.

Belongs to the glycosyl hydrolase 1 family.

It catalyses the reaction Hydrolysis of terminal, non-reducing beta-D-glucosyl residues with release of beta-D-glucose.. This Arabidopsis thaliana (Mouse-ear cress) protein is Putative beta-glucosidase 2.